The chain runs to 308 residues: Sulfoquinovosyl glycerol transport system permease protein SmoG (308 aa).

A run of 6 helical transmembrane segments spans residues 28–48, 92–112, 126–146, 164–184, 223–243, and 279–299; these read LAVL…VYPV, VLIT…LALL, SLLI…AWFF, GIIW…TIIW, ITLP…TITA, and LGYG…VTAV. Residues 88-300 enclose the ABC transmembrane type-1 domain; it reads TWNTVLITLI…ALSMCVTAVY (213 aa).

The protein belongs to the binding-protein-dependent transport system permease family. As to quaternary structure, the complex is probably composed of two ATP-binding proteins (SmoE), two transmembrane proteins (SmoG and SmoH) and a solute-binding protein (SmoF).

It is found in the cell inner membrane. Its function is as follows. Part of the ABC transporter complex SmoEFGH involved in sulfoquinovosyl glycerol (SQGro) uptake. Responsible for the translocation of the substrate across the membrane. This is Sulfoquinovosyl glycerol transport system permease protein SmoG from Agrobacterium fabrum (strain C58 / ATCC 33970) (Agrobacterium tumefaciens (strain C58)).